The chain runs to 94 residues: UPF0358 protein Bcer98_2651 (94 aa).

It belongs to the UPF0358 family.

This Bacillus cytotoxicus (strain DSM 22905 / CIP 110041 / 391-98 / NVH 391-98) protein is UPF0358 protein Bcer98_2651.